A 113-amino-acid chain; its full sequence is MRELPKIFGDKSEDLATLFLEQEGFIVIERNYFARKLGEIDIIAQKDEVLHFIEVKSGKADFDPVYNVTPDKLRKVINSAHYYMKSKKIDVSFSVDALIIRGDEVEFIENVTL.

The protein belongs to the UPF0102 family.

The chain is UPF0102 protein SUN_0231 from Sulfurovum sp. (strain NBC37-1).